A 321-amino-acid polypeptide reads, in one-letter code: Eukaryotic translation initiation factor 3 subunit I (321 aa).

WD repeat units follow at residues 8-47 (GHER…RLGT), 50-89 (GHGG…TLSK), 140-179 (VDNS…KLIS), 182-221 (EHSK…HLKT), and 279-318 (GHFG…DDIE).

The protein belongs to the eIF-3 subunit I family. Component of the eukaryotic translation initiation factor 3 (eIF-3) complex.

Its subcellular location is the cytoplasm. Functionally, component of the eukaryotic translation initiation factor 3 (eIF-3) complex, which is involved in protein synthesis of a specialized repertoire of mRNAs and, together with other initiation factors, stimulates binding of mRNA and methionyl-tRNAi to the 40S ribosome. The eIF-3 complex specifically targets and initiates translation of a subset of mRNAs involved in cell proliferation. The sequence is that of Eukaryotic translation initiation factor 3 subunit I from Nematostella vectensis (Starlet sea anemone).